The sequence spans 178 residues: Fimbrial adapter PapK (178 aa).

An N-terminal signal peptide occupies residues M1–A21.

The protein resides in the secreted. It localises to the fimbrium. In terms of biological role, adapter that links the pilus rod to the base of the tip fibrillum. Regulates the length of the tip fibrillum and joins it to the pilus rod. Pili are polar filaments radiating from the surface of the bacterium to a length of 0.5-1.5 micrometers and numbering 100-300 per cell, and enable bacteria to colonize the epithelium of specific host organs. The protein is Fimbrial adapter PapK (papK) of Escherichia coli O6:H1 (strain CFT073 / ATCC 700928 / UPEC).